A 250-amino-acid polypeptide reads, in one-letter code: Solute carrier family 66 member 2 (250 aa).

Residues 14–80 form the PQ-loop 1 domain; it reads RMLVSWGASC…HHFESPLLWQ (67 aa). 6 consecutive transmembrane segments (helical) span residues 15-35, 49-69, 72-92, 118-138, 151-173, and 212-232; these read MLVS…PYIP, FSIY…LFWF, HFES…LLML, FFWH…FTGV, LFVE…PQLY, and FSIC…QVYL. The PQ-loop 2 domain occupies 149–215; it reads SPLFVEILGF…NQAPFQFSIC (67 aa).

Its subcellular location is the membrane. The chain is Solute carrier family 66 member 2 (slc66a2) from Xenopus laevis (African clawed frog).